A 726-amino-acid chain; its full sequence is PWWP domain-containing protein 2 (726 aa).

Basic and acidic residues predominate over residues 1–10 (MSTESERIES). Residues 1-26 (MSTESERIESVSEANASSLEVGNDQM) form a disordered region. Residues 12 to 26 (SEANASSLEVGNDQM) are compositionally biased toward polar residues. Residues 199 to 260 (DSDLVWAKVR…ASRIKPFRQH (62 aa)) form the PWWP domain. Residues 392–441 (APKISPAEEQSSLVEVSDPEPTKSKQVYTKRRKTNLQTEQSSLVEVSDPD) are disordered. Residues 426 to 435 (NLQTEQSSLV) are compositionally biased toward polar residues. 2 consecutive short sequence motifs (nuclear localization signal) follow at residues 460-467 (KKKEKTLA) and 495-502 (KKRKVVQS). Disordered stretches follow at residues 472–545 (EKRV…PQKA) and 568–726 (TRLL…VSAE). Positions 494 to 512 (EKKRKVVQSKVPKSTKKIK) are enriched in basic residues. Polar residues predominate over residues 606 to 634 (SPSTTLSSPHAASVTKTTSGKSNSVSLDH). The span at 658–688 (LESRDLKDSSKEQVVHEDKKEAANVADEKSI) shows a compositional bias: basic and acidic residues.

The protein belongs to the PDP family. As to quaternary structure, interacts with DEK3. Binds to MSI4/FVE and MSI5. Component of the PRC2 (polycomb repressive complex 2) complex which regulates histone methylation on histone H3K27.

The protein resides in the nucleus. Together with PDP1, PDP3 and PDP6, interacts with MSI4/FVE and MSI5 to suppress FLC, MAF4 and MAF5 expression by regulating the function of the PRC2 complex and modulating H3K27me3 level, thereby promoting flowering. In Arabidopsis thaliana (Mouse-ear cress), this protein is PWWP domain-containing protein 2.